We begin with the raw amino-acid sequence, 362 residues long: Methionine import ATP-binding protein MetN (362 aa).

The ABC transporter domain occupies 23–258 (VRLTDVKRRF…PQAEITGSLL (236 aa)). 55–62 (GRSGAGKS) contacts ATP.

The protein belongs to the ABC transporter superfamily. Methionine importer (TC 3.A.1.24) family. In terms of assembly, the complex is composed of two ATP-binding proteins (MetN), two transmembrane proteins (MetI) and a solute-binding protein (MetQ).

The protein resides in the cell inner membrane. The enzyme catalyses L-methionine(out) + ATP + H2O = L-methionine(in) + ADP + phosphate + H(+). It catalyses the reaction D-methionine(out) + ATP + H2O = D-methionine(in) + ADP + phosphate + H(+). Functionally, part of the ABC transporter complex MetNIQ involved in methionine import. Responsible for energy coupling to the transport system. This is Methionine import ATP-binding protein MetN from Rhizobium johnstonii (strain DSM 114642 / LMG 32736 / 3841) (Rhizobium leguminosarum bv. viciae).